The chain runs to 557 residues: 2-isopropylmalate synthase (557 aa).

The region spanning 33–307 is the Pyruvate carboxyltransferase domain; the sequence is PIWCSSDLRD…DPQLDFSDID (275 aa). Residues Asp42, His246, His248, and Asn282 each coordinate Mg(2+). Residues 439-557 form a regulatory domain region; sequence ANAPYALVSH…SLSQQEAKAA (119 aa).

The protein belongs to the alpha-IPM synthase/homocitrate synthase family. LeuA type 2 subfamily. In terms of assembly, homodimer. It depends on Mg(2+) as a cofactor.

The protein resides in the cytoplasm. It catalyses the reaction 3-methyl-2-oxobutanoate + acetyl-CoA + H2O = (2S)-2-isopropylmalate + CoA + H(+). The protein operates within amino-acid biosynthesis; L-leucine biosynthesis; L-leucine from 3-methyl-2-oxobutanoate: step 1/4. Functionally, catalyzes the condensation of the acetyl group of acetyl-CoA with 3-methyl-2-oxobutanoate (2-ketoisovalerate) to form 3-carboxy-3-hydroxy-4-methylpentanoate (2-isopropylmalate). The sequence is that of 2-isopropylmalate synthase from Pseudomonas putida (strain GB-1).